Here is a 101-residue protein sequence, read N- to C-terminus: uncharacterized protein (101 aa).

Residues 72-94 (ILCPSFLNYSFINIYCFGPYTMV) form a helical membrane-spanning segment.

It is found in the membrane. This is an uncharacterized protein from Schizosaccharomyces pombe (strain 972 / ATCC 24843) (Fission yeast).